The following is a 188-amino-acid chain: Small ribosomal subunit protein bS18c (188 aa).

Residues 1-19 (MNNQSFNNFSQVNSNSSFF) show a composition bias toward low complexity. The interval 1–79 (MNNQSFNNFS…TSNKRKVLSV (79 aa)) is disordered. The segment covering 25 to 71 (NLQNTNLEMTNGTNPPSSFSKQTPQKRQSFGTNTNFSKGNSSRGSTS) has biased composition (polar residues).

The protein belongs to the bacterial ribosomal protein bS18 family. In terms of assembly, part of the 30S ribosomal subunit.

It is found in the plastid. The protein resides in the chloroplast. This is Small ribosomal subunit protein bS18c from Tetradesmus obliquus (Green alga).